Consider the following 405-residue polypeptide: MIWRKEYLKKNYIKLLVPICVVLVLAYLNYAINYAVGYKLVYVHHSHAVAIILWVLLGFFQLELLVYWVLIFLVGPGKSPVFPPIDLYSENNKGLIPLPDLFFCDEKGFPYYCSNSNSIKLERSFFSKDVGYNVIKFDHYCIWIGQPIGQDNYLFFMKFMMGFLAFFIIVLIYCARFTRESIQQGEIDHNFIVLFVMSGFWIIMIGCLFGIHLRYVSINMTTLDEITINQRKRYNRWKDARKNPNMPSWMKTKNPPRKETGRKYVNVKHKTGRAIVRYYIDERPFDMGFRRNWINLVFNGNRNHGKDDEFYTLWRLAAAFVVFIIPFIDIPFSFRGKLQVKDDVEQELHEQENLLAKYTVYSSVVNDKFMNMIDEKLKKNSYSAPGYLVETTPQNNQSTIDKDSI.

5 helical membrane passes run tyrosine 12–isoleucine 32, isoleucine 51–isoleucine 71, leucine 154–cysteine 174, phenylalanine 191–isoleucine 211, and phenylalanine 310–isoleucine 330. Residues tyrosine 111–methionine 161 enclose the DHHC domain.

This sequence belongs to the DHHC palmitoyltransferase family. PFA5 subfamily. Autopalmitoylated.

Its subcellular location is the membrane. The catalysed reaction is L-cysteinyl-[protein] + hexadecanoyl-CoA = S-hexadecanoyl-L-cysteinyl-[protein] + CoA. This Candida albicans (strain SC5314 / ATCC MYA-2876) (Yeast) protein is Palmitoyltransferase PFA5 (PFA5).